The following is a 77-amino-acid chain: uncharacterized protein (77 aa).

The region spanning 11–65 (FARLRREKGLTQEEVEARSGFSQQYLSSLERGRRNPTVITLYELAQALGVSHVEL) is the HTH cro/C1-type domain. A DNA-binding region (H-T-H motif) is located at residues 22 to 41 (QEEVEARSGFSQQYLSSLER).

This is an uncharacterized protein from Sinorhizobium fredii (strain NBRC 101917 / NGR234).